We begin with the raw amino-acid sequence, 118 residues long: Large ribosomal subunit protein bL19 (118 aa).

Belongs to the bacterial ribosomal protein bL19 family.

In terms of biological role, this protein is located at the 30S-50S ribosomal subunit interface and may play a role in the structure and function of the aminoacyl-tRNA binding site. This is Large ribosomal subunit protein bL19 from Lactiplantibacillus plantarum (strain ATCC BAA-793 / NCIMB 8826 / WCFS1) (Lactobacillus plantarum).